Here is a 98-residue protein sequence, read N- to C-terminus: Cell division topological specificity factor (98 aa).

This sequence belongs to the MinE family.

Prevents the cell division inhibition by proteins MinC and MinD at internal division sites while permitting inhibition at polar sites. This ensures cell division at the proper site by restricting the formation of a division septum at the midpoint of the long axis of the cell. This is Cell division topological specificity factor from Nitrosomonas eutropha (strain DSM 101675 / C91 / Nm57).